The following is a 195-amino-acid chain: U8 snoRNA-decapping enzyme (195 aa).

The Nudix hydrolase domain occupies 18 to 168 (GWRHACHALL…LENTFIGNAR (151 aa)). The substrate site is built by histidine 24, arginine 50, and phenylalanine 57. Mn(2+) is bound by residues glycine 59, glutamate 76, glutamate 80, and histidine 99. The Nudix box signature appears at 61 to 82 (FVDLRDGSLEDGLNRELGEELG). Residues asparagine 166 and glutamine 170 each contribute to the substrate site. Residue glutamate 173 coordinates Mn(2+).

It belongs to the Nudix hydrolase family. NUDT16 subfamily. In terms of assembly, homodimer. Requires Mg(2+) as cofactor. Mn(2+) is required as a cofactor. Co(2+) serves as cofactor.

The protein localises to the nucleus. Its subcellular location is the nucleolus. It is found in the nucleoplasm. The protein resides in the cytoplasm. It carries out the reaction a 5'-end (N(7)-methyl 5'-triphosphoguanosine)-ribonucleoside in mRNA + H2O = N(7)-methyl-GDP + a 5'-end phospho-ribonucleoside in mRNA + 2 H(+). The catalysed reaction is IDP + H2O = IMP + phosphate + H(+). It catalyses the reaction dIDP + H2O = dIMP + phosphate + H(+). The enzyme catalyses a 5'-end NAD(+)-phospho-ribonucleoside in mRNA + H2O = a 5'-end phospho-ribonucleoside in mRNA + NAD(+) + H(+). It carries out the reaction a 5'-end FAD-phospho-ribonucleoside in mRNA + H2O = a 5'-end phospho-adenosine-phospho-ribonucleoside in mRNA + FMN + 2 H(+). The catalysed reaction is a 5'-end CoA-ribonucleoside in mRNA + H2O = a 5'-end phospho-adenosine-phospho-ribonucleoside in mRNA + (R)-4'-phosphopantetheine + 2 H(+). RNA-binding and decapping enzyme that catalyzes the cleavage of the cap structure of snoRNAs and mRNAs in a metal-dependent manner. Part of the U8 snoRNP complex that is required for the accumulation of mature 5.8S and 28S rRNA. Has diphosphatase activity and removes m7G and/or m227G caps from U8 snoRNA and leaves a 5'monophosphate on the RNA. Also catalyzes the cleavage of the cap structure on mRNAs. Does not hydrolyze cap analog structures like 7-methylguanosine nucleoside triphosphate (m7GpppG). Also hydrolysis m7G- and m227G U3-capped RNAs but with less efficiencies. Has broad substrate specificity with manganese or cobalt as cofactor and can act on various RNA species. Binds to the U8 snoRNA; metal is not required for RNA-binding. May play a role in the regulation of snoRNAs and mRNAs degradation. Also acts as a phosphatase; hydrolyzes the non-canonical purine nucleotides inosine diphosphate (IDP) and deoxyinosine diphosphate (dITP) as well as guanosine diphosphate (GDP), deoxyguanosine diphosphate (dGDP), xanthine diphosphate (XDP), inosine triphosphate (ITP) and deoxyinosine triphosphate (ITP) to their respective monophosphate derivatives and does not distinguish between the deoxy- and ribose forms. The order of activity with different substrates is IDP &gt; dIDP &gt;&gt; GDP = dGDP &gt; XDP = ITP = dITP. Binds strongly to GTP, ITP and XTP. Participates in the hydrolysis of dIDP/IDP and probably excludes non-canonical purines from RNA and DNA precursor pools, thus preventing their incorporation into RNA and DNA and avoiding chromosomal lesions. Exhibits decapping activity towards NAD-capped RNAs and FAD-capped RNAs. Exhibits decapping activity towards dpCoA-capped RNAs in vitro. The sequence is that of U8 snoRNA-decapping enzyme (NUDT16) from Bos taurus (Bovine).